The primary structure comprises 85 residues: Cell division topological specificity factor (85 aa).

It belongs to the MinE family.

In terms of biological role, prevents the cell division inhibition by proteins MinC and MinD at internal division sites while permitting inhibition at polar sites. This ensures cell division at the proper site by restricting the formation of a division septum at the midpoint of the long axis of the cell. This Thioalkalivibrio sulfidiphilus (strain HL-EbGR7) protein is Cell division topological specificity factor.